The following is a 589-amino-acid chain: Outer envelope protein 64, chloroplastic (589 aa).

M1 is a topological domain (chloroplast intermembrane). The chain crosses the membrane as a helical span at residues 2–22 (ASQAANLWVLLGLGLAGILML). At 23–141 (TKKLKKTVRE…NPAAPTRIPG (119 aa)) the chain is on the cytoplasmic side. A helical transmembrane segment spans residues 142–162 (GACSGAAVAVATNAVDFALGI). Residues 163-398 (DTVGGVRVPA…EITSEDYQNR (236 aa)) are Chloroplast intermembrane-facing. Residues 399 to 419 (ASSLLSIASISGCCQVTVPLG) form a helical membrane-spanning segment. Residues 420–589 (HHEKCPISVS…LSAERLRKFQ (170 aa)) lie on the Cytoplasmic side of the membrane. TPR repeat units follow at residues 474–507 (AEIAKEKGNQAFKEKLWQKAIGLYSEAIKLSDNN), 508–541 (ATYYSNRAAAYLELGGFLQAEEDCTKAITLDKKN), and 542–575 (VKAYLRRGTAREMLGDCKGAIEDFRYALVLEPNN).

As to quaternary structure, part of the Toc complex and of the intermembrane space complex. Expressed in roots, cotyledons, leaves and flower buds.

The protein localises to the plastid. It localises to the chloroplast outer membrane. Its function is as follows. Chaperone receptor mediating Hsp90-dependent protein targeting to chloroplasts. Bi-functional preprotein receptor acting on both sides of the membrane. Not essential for an efficient import of pre-proteins into plastids. The protein is Outer envelope protein 64, chloroplastic (OEP64) of Arabidopsis thaliana (Mouse-ear cress).